A 523-amino-acid chain; its full sequence is Bifunctional purine biosynthesis protein PurH (523 aa).

The region spanning 1-152 (MSTDDGRRPI…KNHPSAAVVT (152 aa)) is the MGS-like domain.

This sequence belongs to the PurH family.

The enzyme catalyses (6R)-10-formyltetrahydrofolate + 5-amino-1-(5-phospho-beta-D-ribosyl)imidazole-4-carboxamide = 5-formamido-1-(5-phospho-D-ribosyl)imidazole-4-carboxamide + (6S)-5,6,7,8-tetrahydrofolate. It carries out the reaction IMP + H2O = 5-formamido-1-(5-phospho-D-ribosyl)imidazole-4-carboxamide. Its pathway is purine metabolism; IMP biosynthesis via de novo pathway; 5-formamido-1-(5-phospho-D-ribosyl)imidazole-4-carboxamide from 5-amino-1-(5-phospho-D-ribosyl)imidazole-4-carboxamide (10-formyl THF route): step 1/1. It functions in the pathway purine metabolism; IMP biosynthesis via de novo pathway; IMP from 5-formamido-1-(5-phospho-D-ribosyl)imidazole-4-carboxamide: step 1/1. This chain is Bifunctional purine biosynthesis protein PurH, found in Mycobacterium bovis (strain BCG / Pasteur 1173P2).